The sequence spans 463 residues: Dipeptidyl peptidase 1 (463 aa).

Residues 1–24 form the signal peptide; that stretch reads MGPWSGSRLVALLLLVYGAGSVRG. 2 N-linked (GlcNAc...) asparagine glycosylation sites follow: Asn29 and Asn53. 2 disulfides stabilise this stretch: Cys30–Cys118 and Cys54–Cys136. A propeptide spanning residues 135 to 230 is cleaved from the precursor; it reads ACFTGRKTGN…TAEIQKKILH (96 aa). An N-linked (GlcNAc...) asparagine glycan is attached at Asn144. Cystine bridges form between Cys255–Cys298, Cys291–Cys331, and Cys321–Cys337. The active site involves Cys258. Asn276 carries N-linked (GlcNAc...) asparagine glycosylation. Chloride-binding residues include Phe302 and Tyr304. Chloride is bound at residue Tyr347. Residues His405 and Asn427 contribute to the active site.

The protein belongs to the peptidase C1 family. In terms of assembly, tetramer of heterotrimers consisting of exclusion domain, heavy- and light chains. Chloride serves as cofactor.

It is found in the lysosome. The enzyme catalyses Release of an N-terminal dipeptide, Xaa-Yaa-|-Zaa-, except when Xaa is Arg or Lys, or Yaa or Zaa is Pro.. Thiol protease. Has dipeptidylpeptidase activity. Active against a broad range of dipeptide substrates composed of both polar and hydrophobic amino acids. Proline cannot occupy the P1 position and arginine cannot occupy the P2 position of the substrate. Can act as both an exopeptidase and endopeptidase. Activates serine proteases such as elastase, cathepsin G and granzymes A and B. In Bos taurus (Bovine), this protein is Dipeptidyl peptidase 1 (CTSC).